The sequence spans 748 residues: ATP-dependent rRNA helicase SPB4 (748 aa).

A Q motif motif is present at residues 15 to 43 (WAKLNPPLSPWILDVINSMGFKNMTPVQA). In terms of domain architecture, Helicase ATP-binding spans 46-260 (IPRAVKNQDC…GLGLRNPVRI (215 aa)). 59-66 (AVTGSGKT) contributes to the ATP binding site. Residues 119–156 (ESEEETGDVEAHAPPFASSSRSPSPQTPDKPLFPLPML) form a disordered region. Over residues 132–142 (PPFASSSRSPS) the composition is skewed to low complexity. Residues 143 to 152 (PQTPDKPLFP) are compositionally biased toward pro residues. The short motif at 207–210 (DEAD) is the DEAD box element. In terms of domain architecture, Helicase C-terminal spans 295–460 (KTLQLIRLLL…KAQRSILDFL (166 aa)). The disordered stretch occupies residues 614-748 (AQRADNQSSN…IGGGMFDDLE (135 aa)). Composition is skewed to basic and acidic residues over residues 626–669 (ARAE…KYEW) and 708–730 (EIGK…KESS). A compositionally biased stretch (gly residues) spans 732 to 748 (GGAGGGGIGGGMFDDLE).

The protein belongs to the DEAD box helicase family. DDX55/SPB4 subfamily. As to quaternary structure, component of pre-60S ribosomal complexes.

It localises to the nucleus. The protein localises to the nucleolus. It carries out the reaction ATP + H2O = ADP + phosphate + H(+). ATP-binding RNA helicase involved in the biogenesis of 60S ribosomal subunits. Binds 90S pre-ribosomal particles and dissociates from pre-60S ribosomal particles after processing of 27SB pre-rRNA. Required for the normal formation of 18S rRNA through the processing of pre-rRNAs at sites A0, A1 and A2, and the normal formation of 25S and 5.8S rRNAs through the processing of pre-rRNAs at sites C1 and C2. The polypeptide is ATP-dependent rRNA helicase SPB4 (Cryptococcus neoformans var. neoformans serotype D (strain B-3501A) (Filobasidiella neoformans)).